The sequence spans 151 residues: Protein archease-like (151 aa).

Residues D20, D150, and I151 each contribute to the Ca(2+) site.

Belongs to the archease family.

Component of the tRNA-splicing ligase complex required to facilitate the enzymatic turnover of catalytic subunit RtcB. The chain is Protein archease-like from Dictyostelium discoideum (Social amoeba).